Consider the following 379-residue polypeptide: Lipid-A-disaccharide synthase (379 aa).

The protein belongs to the LpxB family.

The enzyme catalyses a lipid X + a UDP-2-N,3-O-bis[(3R)-3-hydroxyacyl]-alpha-D-glucosamine = a lipid A disaccharide + UDP + H(+). The protein operates within bacterial outer membrane biogenesis; LPS lipid A biosynthesis. Its function is as follows. Condensation of UDP-2,3-diacylglucosamine and 2,3-diacylglucosamine-1-phosphate to form lipid A disaccharide, a precursor of lipid A, a phosphorylated glycolipid that anchors the lipopolysaccharide to the outer membrane of the cell. The sequence is that of Lipid-A-disaccharide synthase from Pseudomonas fluorescens (strain SBW25).